Reading from the N-terminus, the 601-residue chain is 1-deoxy-D-xylulose-5-phosphate synthase (601 aa).

Thiamine diphosphate contacts are provided by residues histidine 63 and 104-106 (GHS). Aspartate 135 contacts Mg(2+). Residues 136-137 (GS), asparagine 164, tyrosine 272, and glutamate 353 each bind thiamine diphosphate. Asparagine 164 is a Mg(2+) binding site.

It belongs to the transketolase family. DXPS subfamily. Homodimer. It depends on Mg(2+) as a cofactor. Thiamine diphosphate is required as a cofactor.

The enzyme catalyses D-glyceraldehyde 3-phosphate + pyruvate + H(+) = 1-deoxy-D-xylulose 5-phosphate + CO2. It functions in the pathway metabolic intermediate biosynthesis; 1-deoxy-D-xylulose 5-phosphate biosynthesis; 1-deoxy-D-xylulose 5-phosphate from D-glyceraldehyde 3-phosphate and pyruvate: step 1/1. Functionally, catalyzes the acyloin condensation reaction between C atoms 2 and 3 of pyruvate and glyceraldehyde 3-phosphate to yield 1-deoxy-D-xylulose-5-phosphate (DXP). The protein is 1-deoxy-D-xylulose-5-phosphate synthase of Aliarcobacter butzleri (strain RM4018) (Arcobacter butzleri).